Consider the following 156-residue polypeptide: Rhombotin-1 (156 aa).

LIM zinc-binding domains lie at 22-84 (KGCA…LFGT) and 86-148 (GNCA…GQLN).

The protein localises to the nucleus. Functionally, may be involved in gene regulation within neural lineage cells potentially by direct DNA binding or by binding to other transcription factors. This chain is Rhombotin-1, found in Xenopus laevis (African clawed frog).